Here is a 620-residue protein sequence, read N- to C-terminus: Sodium-dependent dopamine transporter (620 aa).

Residues 1 to 56 (MSKSKCSVGLMSSVVAPAKEPNAMGPKEVELILVKEQNGVQLTSSTLTNPRQSPVE) are Cytoplasmic-facing. Residues 57 to 95 (AQDRETWGKKIDFLLSVIGFAVDLANVWRFPYLCYKNGG) form a discontinuously helical membrane-spanning segment. Na(+)-binding residues include Gly-75, Ala-77, Val-78, Asp-79, and Asn-82. Residue Asp-79 coordinates dopamine. 2 consecutive transmembrane segments (helical) span residues 96–127 (GAFL…NREG) and 128–171 (AAGV…FSSF). Ser-149 and Gly-153 together coordinate dopamine. Residues 172–236 (TTELPWIHCN…SHGIDDLGPP (65 aa)) lie on the Extracellular side of the membrane. A disulfide bridge links Cys-180 with Cys-189. N-linked (GlcNAc...) asparagine glycans are attached at residues Asn-181, Asn-188, and Asn-205. A run of 2 helical transmembrane segments spans residues 237–256 (RWQL…FSLW) and 257–287 (KGVK…GVTL). Residues 288–306 (PGAIDGIRAYLSVDFYRLC) lie on the Extracellular side of the membrane. A discontinuously helical membrane pass occupies residues 307 to 335 (EASVWIDAATQVCFSLGVGFGVLIAFSSY). Gln-317 is a binding site for chloride. Phe-320 is a binding site for dopamine. The Na(+) site is built by Ser-321 and Asn-353. Ser-321 serves as a coordination point for chloride. A helical transmembrane segment spans residues 336-376 (NKFTNNCYRDAIVTTSINSLTSFSSGFVVFSFLGYMAQKHS). Chloride is bound at residue Ser-357. Residues 377-400 (VPIGDVAKDGPGLIFIIYPEAIAT) are Extracellular-facing. 3 helical membrane passes run 401–442 (LPLS…QLLH), 443–466 (RHRE…CVTN), and 467–499 (GGIY…AWFY). Na(+) contacts are provided by Leu-418, Asp-421, and Ser-422. Residues Ser-422 and Ala-423 each coordinate dopamine. Topologically, residues 500–516 (GVGQFSDDIQQMTGQRP) are cytoplasmic. The helical transmembrane segment at 517-542 (SLYWRLCWKLVSPCFLLFVVVVSIVT) threads the bilayer. Over 543 to 553 (FRPPHYGAYIF) the chain is Extracellular. Residues 554–583 (PDWANALGWVIATSSMAMVPIYAAYKFCSL) traverse the membrane as a helical segment. An interaction with TGFB1I1 region spans residues 561–590 (GWVIATSSMAMVPIYAAYKFCSLPGSFREK). The Cytoplasmic segment spans residues 584 to 620 (PGSFREKLAYAIAPEKDRELVDRGEVRQFTLRHWLKV).

This sequence belongs to the sodium:neurotransmitter symporter (SNF) (TC 2.A.22) family. SLC6A3 subfamily. In terms of assembly, monomer. Homooligomer; disulfide-linked. Interacts with PRKCABP and TGFB1I1. Interacts (via N-terminus) with SYNGR3 (via N-terminus). Interacts with SLC18A2. Interacts with TOR1A (ATP-bound); TOR1A regulates SLC6A3 subcellular location. Interacts with alpha-synuclein/SNCA. Interacts with SEPTIN4.

Its subcellular location is the cell membrane. The protein localises to the cell projection. The protein resides in the neuron projection. It is found in the axon. It carries out the reaction dopamine(out) + chloride(out) + Na(+)(out) = dopamine(in) + chloride(in) + Na(+)(in). It catalyses the reaction (R)-noradrenaline(out) + chloride(out) + Na(+)(out) = (R)-noradrenaline(in) + chloride(in) + Na(+)(in). The enzyme catalyses dopamine(out) + chloride(out) + 2 Na(+)(out) = dopamine(in) + chloride(in) + 2 Na(+)(in). Inhibited by zinc ions. Functionally, mediates sodium- and chloride-dependent transport of dopamine. Also mediates sodium- and chloride-dependent transport of norepinephrine (also known as noradrenaline). Regulator of light-dependent retinal hyaloid vessel regression, downstream of OPN5 signaling. The protein is Sodium-dependent dopamine transporter (SLC6A3) of Macaca fascicularis (Crab-eating macaque).